Reading from the N-terminus, the 235-residue chain is Orotidine 5'-phosphate decarboxylase (235 aa).

Substrate contacts are provided by residues Asp17, Lys39, 66 to 75 (DMKLLDIDHT), Thr121, Arg182, Gln191, and Arg212. Lys68 functions as the Proton donor in the catalytic mechanism.

This sequence belongs to the OMP decarboxylase family. Type 1 subfamily. As to quaternary structure, homodimer.

The enzyme catalyses orotidine 5'-phosphate + H(+) = UMP + CO2. The protein operates within pyrimidine metabolism; UMP biosynthesis via de novo pathway; UMP from orotate: step 2/2. In terms of biological role, catalyzes the decarboxylation of orotidine 5'-monophosphate (OMP) to uridine 5'-monophosphate (UMP). The polypeptide is Orotidine 5'-phosphate decarboxylase (Bartonella bacilliformis).